A 510-amino-acid chain; its full sequence is ATP synthase subunit alpha, mitochondrial (510 aa).

G171–T178 is a binding site for ATP.

This sequence belongs to the ATPase alpha/beta chains family. In terms of assembly, F-type ATPases have 2 components, CF(1) - the catalytic core - and CF(0) - the membrane proton channel. CF(1) has five subunits: alpha(3), beta(3), gamma(1), delta(1), epsilon(1). CF(0) has three main subunits: a, b and c.

The protein resides in the mitochondrion. Its subcellular location is the mitochondrion inner membrane. Its function is as follows. Mitochondrial membrane ATP synthase (F(1)F(0) ATP synthase or Complex V) produces ATP from ADP in the presence of a proton gradient across the membrane which is generated by electron transport complexes of the respiratory chain. F-type ATPases consist of two structural domains, F(1) - containing the extramembraneous catalytic core, and F(0) - containing the membrane proton channel, linked together by a central stalk and a peripheral stalk. During catalysis, ATP synthesis in the catalytic domain of F(1) is coupled via a rotary mechanism of the central stalk subunits to proton translocation. Subunits alpha and beta form the catalytic core in F(1). Rotation of the central stalk against the surrounding alpha(3)beta(3) subunits leads to hydrolysis of ATP in three separate catalytic sites on the beta subunits. Subunit alpha does not bear the catalytic high-affinity ATP-binding sites. The polypeptide is ATP synthase subunit alpha, mitochondrial (ATPA) (Helianthus annuus (Common sunflower)).